The chain runs to 206 residues: LexA repressor (206 aa).

Positions 28–48 (RAEIATRLGFKSANAAEEHLK) form a DNA-binding region, H-T-H motif. Active-site for autocatalytic cleavage activity residues include S123 and K160.

It belongs to the peptidase S24 family. Homodimer.

The catalysed reaction is Hydrolysis of Ala-|-Gly bond in repressor LexA.. Represses a number of genes involved in the response to DNA damage (SOS response), including recA and lexA. In the presence of single-stranded DNA, RecA interacts with LexA causing an autocatalytic cleavage which disrupts the DNA-binding part of LexA, leading to derepression of the SOS regulon and eventually DNA repair. The protein is LexA repressor of Shewanella oneidensis (strain ATCC 700550 / JCM 31522 / CIP 106686 / LMG 19005 / NCIMB 14063 / MR-1).